We begin with the raw amino-acid sequence, 682 residues long: Potassium-transporting ATPase ATP-binding subunit (682 aa).

4 helical membrane-spanning segments follow: residues 34–54 (PVMF…IAMA), 62–82 (ALFS…ANFA), 219–239 (IALT…TATL), and 254–274 (VLVA…LSAI). Catalysis depends on D307, which acts as the 4-aspartylphosphate intermediate. Residues D344, E348, 377-384 (FTAQSRMS), and K395 each bind ATP. Residues D518 and D522 each contribute to the Mg(2+) site. The next 3 membrane-spanning stretches (helical) occupy residues 588–608 (FAII…LNIM), 616–636 (AILS…PLAL), and 656–676 (IYGL…DLLL).

Belongs to the cation transport ATPase (P-type) (TC 3.A.3) family. Type IA subfamily. As to quaternary structure, the system is composed of three essential subunits: KdpA, KdpB and KdpC.

Its subcellular location is the cell inner membrane. It catalyses the reaction K(+)(out) + ATP + H2O = K(+)(in) + ADP + phosphate + H(+). Part of the high-affinity ATP-driven potassium transport (or Kdp) system, which catalyzes the hydrolysis of ATP coupled with the electrogenic transport of potassium into the cytoplasm. This subunit is responsible for energy coupling to the transport system and for the release of the potassium ions to the cytoplasm. The protein is Potassium-transporting ATPase ATP-binding subunit of Shigella boydii serotype 4 (strain Sb227).